The primary structure comprises 478 residues: MLHLSDFSGPDALLSKPTEGCAHTSPELPRLPARDAPSAAAYPGGDFLSWALSTCGAGGDLTDSCFLEGPAPTPPSGLSYSGSFFIQAVPEHPHDPEALFNLMSGILGLAPFPSPEAAASRSPLDVPFPAGPDALLPDLYSPDLSSAAFPEAFWEAAPSAGAPSQCLFEPQLSPPDVKPGLRAPPASPALDAAASAFKGPYAPWELLSAGAPGNCGSQGSFQTTPEARFSAVGTKVEDLLSISCPAELPGPASRLYPPGAYDAFSLAPGDLGEGTEGLPALLTPPGGEGGSGGEGGEFLAVPQAQLSPLGLRGAATADFSKALVADLPGGSGVAAPSSPATSFPAAKARRKGRRGGKCSARCFCPRPHVKAFACPVESCVRTFARSDELNRHLRIHTGHKPFQCRICLRNFSRSDHLTTHVRTHTGEKPFACDVCGRRFARSDEKKRHSKVHLKQKARAEERLKGLGFYSLGLSFAAL.

The disordered stretch occupies residues 15-37; the sequence is SKPTEGCAHTSPELPRLPARDAP. 3 consecutive C2H2-type zinc fingers follow at residues 372-396, 402-424, and 430-452; these read FACPVESCVRTFARSDELNRHLRIH, FQCRICLRNFSRSDHLTTHVRTH, and FACDVCGRRFARSDEKKRHSKVH.

This sequence belongs to the EGR C2H2-type zinc-finger protein family.

It localises to the nucleus. Its function is as follows. Transcriptional regulator. Recognizes and binds to the DNA sequence 5'-GCGGGGGCG-3' (GSG). Activates the transcription of target genes whose products are required for mitogenesis and differentiation. The chain is Early growth response protein 4 (Egr4) from Rattus norvegicus (Rat).